Here is a 334-residue protein sequence, read N- to C-terminus: Glyoxylate reductase (334 aa).

NADP(+) contacts are provided by residues 158-161, 180-182, and 239-241; these read FGRI, SRT, and IAR. Active-site residues include R241 and E270. The active-site Proton donor is H288. 288-290 provides a ligand contact to NADP(+); sequence HIG.

This sequence belongs to the D-isomer specific 2-hydroxyacid dehydrogenase family. GyaR subfamily. As to quaternary structure, homodimer.

The protein resides in the cytoplasm. The catalysed reaction is glycolate + NAD(+) = glyoxylate + NADH + H(+). The polypeptide is Glyoxylate reductase (Thermococcus gammatolerans (strain DSM 15229 / JCM 11827 / EJ3)).